The sequence spans 434 residues: Serine hydroxymethyltransferase (434 aa).

(6S)-5,6,7,8-tetrahydrofolate-binding positions include Leu133 and 137–139 (GHL). An N6-(pyridoxal phosphate)lysine modification is found at Lys242.

This sequence belongs to the SHMT family. As to quaternary structure, homodimer. Pyridoxal 5'-phosphate is required as a cofactor.

Its subcellular location is the cytoplasm. It carries out the reaction (6R)-5,10-methylene-5,6,7,8-tetrahydrofolate + glycine + H2O = (6S)-5,6,7,8-tetrahydrofolate + L-serine. The protein operates within one-carbon metabolism; tetrahydrofolate interconversion. Its pathway is amino-acid biosynthesis; glycine biosynthesis; glycine from L-serine: step 1/1. Its function is as follows. Catalyzes the reversible interconversion of serine and glycine with tetrahydrofolate (THF) serving as the one-carbon carrier. This reaction serves as the major source of one-carbon groups required for the biosynthesis of purines, thymidylate, methionine, and other important biomolecules. Also exhibits THF-independent aldolase activity toward beta-hydroxyamino acids, producing glycine and aldehydes, via a retro-aldol mechanism. The polypeptide is Serine hydroxymethyltransferase (Methylorubrum populi (strain ATCC BAA-705 / NCIMB 13946 / BJ001) (Methylobacterium populi)).